We begin with the raw amino-acid sequence, 238 residues long: Ribonuclease PH (238 aa).

Phosphate-binding positions include R86 and 124–126 (GTR).

The protein belongs to the RNase PH family. As to quaternary structure, homohexameric ring arranged as a trimer of dimers.

The enzyme catalyses tRNA(n+1) + phosphate = tRNA(n) + a ribonucleoside 5'-diphosphate. Its function is as follows. Phosphorolytic 3'-5' exoribonuclease that plays an important role in tRNA 3'-end maturation. Removes nucleotide residues following the 3'-CCA terminus of tRNAs; can also add nucleotides to the ends of RNA molecules by using nucleoside diphosphates as substrates, but this may not be physiologically important. Probably plays a role in initiation of 16S rRNA degradation (leading to ribosome degradation) during starvation. The polypeptide is Ribonuclease PH (Haemophilus ducreyi (strain 35000HP / ATCC 700724)).